A 400-amino-acid chain; its full sequence is Large envelope protein (400 aa).

Met1 carries the N-acetylmethionine modification. Disordered stretches follow at residues 1–20 (MGGW…SVPN) and 89–115 (STIP…LRDS). The N-myristoyl glycine; by host moiety is linked to residue Gly2. A pre-S1 region spans residues 2 to 119 (GGWSSKPRKG…PPLRDSHPQA (118 aa)). A pre-S region spans residues 2–174 (GGWSSKPRKG…SARTGDPVTN (173 aa)). Topologically, residues 2 to 181 (GGWSSKPRKG…VTNMENITSG (180 aa)) are virion surface; in external conformation. The Intravirion; in internal conformation segment spans residues 2 to 253 (GGWSSKPRKG…PGYRWMCLRR (252 aa)). An N-linked (GlcNAc...) asparagine glycan is attached at Trp4. Polar residues predominate over residues 89–106 (STIPPPASTNRQSGRQPT). The interval 120-174 (MQWNSTAFHQTLQDPRVRGLYLPAGGSSSGTVNPAPNIASHISSISARTGDPVTN) is pre-S2. The helical transmembrane segment at 182–202 (FLGPLLVLQAGFFLLTRILTI) threads the bilayer. The Intravirion; in external conformation portion of the chain corresponds to 203-253 (PQSLDSWWTSLNFLGGSPVCLGQNSQSPTSNHSPTSCPPICPGYRWMCLRR). The helical transmembrane segment at 254-274 (FIIFLFILLLCLIFLLVLLDY) threads the bilayer. Residues 275-348 (QGMLPVCPLI…WASVRFSWLS (74 aa)) lie on the Virion surface side of the membrane. The N-linked (GlcNAc...) asparagine; by host; partial glycan is linked to Asn320. A helical membrane pass occupies residues 349–369 (LLVPFVQWFVGLSPTVWLSAI). The Intravirion segment spans residues 370–375 (WMMWYW). A helical transmembrane segment spans residues 376–398 (GPSLYSIVSPFIPLLPIFFCLWV). Residues 399–400 (YI) lie on the Virion surface side of the membrane.

This sequence belongs to the orthohepadnavirus major surface antigen family. In its internal form (Li-HBsAg), interacts with the capsid protein and with the isoform S. Interacts with host chaperone CANX. In terms of assembly, associates with host chaperone CANX through its pre-S2 N glycan; this association may be essential for isoform M proper secretion. As to quaternary structure, interacts with isoform L. Interacts with the antigens of satellite virus HDV (HDVAgs); this interaction is required for encapsidation of HDV genomic RNA. In terms of processing, isoform M is N-terminally acetylated by host at a ratio of 90%, and N-glycosylated by host at the pre-S2 region. Post-translationally, myristoylated.

It is found in the virion membrane. The large envelope protein exists in two topological conformations, one which is termed 'external' or Le-HBsAg and the other 'internal' or Li-HBsAg. In its external conformation the protein attaches the virus to cell receptors and thereby initiating infection. This interaction determines the species specificity and liver tropism. This attachment induces virion internalization predominantly through caveolin-mediated endocytosis. The large envelope protein also assures fusion between virion membrane and endosomal membrane. In its internal conformation the protein plays a role in virion morphogenesis and mediates the contact with the nucleocapsid like a matrix protein. Functionally, the middle envelope protein plays an important role in the budding of the virion. It is involved in the induction of budding in a nucleocapsid independent way. In this process the majority of envelope proteins bud to form subviral lipoprotein particles of 22 nm of diameter that do not contain a nucleocapsid. The protein is Large envelope protein of Hepatitis B virus genotype A2 subtype adw2 (strain Rutter 1979) (HBV-A).